A 382-amino-acid polypeptide reads, in one-letter code: Pregnancy-associated glycoprotein 1 (382 aa).

The signal sequence occupies residues 1 to 15 (MKWLVLLGLVAFSEC). Positions 16–53 (IVKIPLRRVKTMRNTLSGKKMLNSFLKEHAYRLSQISF) are cleaved as a propeptide — activation peptide. N-linked (GlcNAc...) asparagine glycans are attached at residues Asn-57 and Asn-74. One can recognise a Peptidase A1 domain in the interval 71-379 (YVGNITIGTP…DRGNDRIGLA (309 aa)). Residues Cys-102 and Cys-110 are joined by a disulfide bond. Asn-128 carries an N-linked (GlcNAc...) asparagine glycan. Disulfide bonds link Cys-263/Cys-267 and Cys-305/Cys-339.

This sequence belongs to the peptidase A1 family. As to expression, trophoblast and placental tissue. Produced specifically in the invasive binucleate cells of the placenta.

It is found in the secreted. The protein resides in the extracellular space. Functionally, has no proteolytic activity. The polypeptide is Pregnancy-associated glycoprotein 1 (Ovis aries (Sheep)).